The chain runs to 180 residues: UPF0340 protein llmg_0465 (180 aa).

The protein belongs to the UPF0340 family.

In Lactococcus lactis subsp. cremoris (strain MG1363), this protein is UPF0340 protein llmg_0465.